An 858-amino-acid chain; its full sequence is Heat shock protein 105 kDa (858 aa).

Serine 2 is modified (N-acetylserine). At lysine 471 the chain carries N6-acetyllysine. Disordered regions lie at residues 500–584 (KVPT…PPEA) and 796–858 (CEPV…MDLD). Positions 504-514 (EENEMSSEADM) are enriched in acidic residues. A phosphoserine mark is found at serine 509 and serine 510. The segment covering 532-554 (QQDNSEAGTQPQVQTDAQQTSQS) has biased composition (polar residues). Serine 557 carries the post-translational modification Phosphoserine. Phosphothreonine is present on threonine 561. 2 stretches are compositionally biased toward basic and acidic residues: residues 563 to 584 (EENKIPDADKANEKKVDQPPEA) and 805 to 814 (PKIESPKLER). Position 809 is a phosphoserine (serine 809). The residue at position 815 (threonine 815) is a Phosphothreonine. Residues 821–832 (IDKKEEDLEDKN) show a composition bias toward basic and acidic residues. Residues 849 to 858 (EKNSVNMDLD) show a composition bias toward polar residues.

It belongs to the heat shock protein 70 family. Interacts with HSPA8/HSC70. Interacts with HSPA1A (via NBD) and HSPA1B (via NBD). In terms of processing, phosphorylation on Ser-509 may be important for regulation of the HSPA8/HSC70 chaperone activity.

The protein resides in the cytoplasm. In terms of biological role, acts as a nucleotide-exchange factor (NEF) for chaperone proteins HSPA1A and HSPA1B, promoting the release of ADP from HSPA1A/B thereby triggering substrate release. Prevents the aggregation of denatured proteins in cells under severe stress, on which the ATP levels decrease markedly. Inhibits HSPA8/HSC70 ATPase and chaperone activities. This chain is Heat shock protein 105 kDa (HSPH1), found in Pongo abelii (Sumatran orangutan).